Reading from the N-terminus, the 134-residue chain is Ribonuclease VapC1 (134 aa).

In terms of domain architecture, PINc spans 3-132; that stretch reads YMLDTNIIIY…RITDLQWQDW (130 aa). 2 residues coordinate Mg(2+): Asp6 and Asp99.

This sequence belongs to the PINc/VapC protein family. Forms a complex with VapB1. Mg(2+) serves as cofactor.

Toxic component of a type II toxin-antitoxin (TA) system. Upon expression in E.coli inhibits growth in liquid culture. Its toxic effect is neutralized by coexpression with antitoxin VapB1. Degrades RNA but not ss- or ds-DNA in vitro, degradation is inhibited by VapB1 antitoxin. The chain is Ribonuclease VapC1 from Haemophilus influenzae (strain R2866).